Here is a 217-residue protein sequence, read N- to C-terminus: Uracil-DNA glycosylase (217 aa).

The Proton acceptor role is filled by Asp-62.

This sequence belongs to the uracil-DNA glycosylase (UDG) superfamily. UNG family.

It localises to the cytoplasm. The catalysed reaction is Hydrolyzes single-stranded DNA or mismatched double-stranded DNA and polynucleotides, releasing free uracil.. Its function is as follows. Excises uracil residues from the DNA which can arise as a result of misincorporation of dUMP residues by DNA polymerase or due to deamination of cytosine. The chain is Uracil-DNA glycosylase from Streptococcus equi subsp. zooepidemicus (strain MGCS10565).